A 120-amino-acid chain; its full sequence is NAD(P)H-quinone oxidoreductase subunit 3 (120 aa).

3 consecutive transmembrane segments (helical) span residues 6-26 (GYDAFLGFLLIAAAVPVLALV), 64-84 (MFALVFVIFDVETVFLYPWAV), and 89-109 (LGLLAFIEALIFIAILLVALA).

It belongs to the complex I subunit 3 family. As to quaternary structure, NDH-1 can be composed of about 15 different subunits; different subcomplexes with different compositions have been identified which probably have different functions.

The protein localises to the cellular thylakoid membrane. The enzyme catalyses a plastoquinone + NADH + (n+1) H(+)(in) = a plastoquinol + NAD(+) + n H(+)(out). The catalysed reaction is a plastoquinone + NADPH + (n+1) H(+)(in) = a plastoquinol + NADP(+) + n H(+)(out). In terms of biological role, NDH-1 shuttles electrons from an unknown electron donor, via FMN and iron-sulfur (Fe-S) centers, to quinones in the respiratory and/or the photosynthetic chain. The immediate electron acceptor for the enzyme in this species is believed to be plastoquinone. Couples the redox reaction to proton translocation, and thus conserves the redox energy in a proton gradient. Cyanobacterial NDH-1 also plays a role in inorganic carbon-concentration. This Synechococcus sp. (strain CC9902) protein is NAD(P)H-quinone oxidoreductase subunit 3.